Here is a 238-residue protein sequence, read N- to C-terminus: ATP synthase subunit a (238 aa).

The next 5 membrane-spanning stretches (helical) occupy residues 15-35 (IFNL…FVFI), 76-96 (YSLF…LGLM), 111-131 (PTAN…LTHI), 167-187 (LALR…LLLL), and 208-230 (AFSV…VYLG).

This sequence belongs to the ATPase A chain family. F-type ATPases have 2 components, CF(1) - the catalytic core - and CF(0) - the membrane proton channel. CF(1) has five subunits: alpha(3), beta(3), gamma(1), delta(1), epsilon(1). CF(0) has three main subunits: a(1), b(2) and c(9-12). The alpha and beta chains form an alternating ring which encloses part of the gamma chain. CF(1) is attached to CF(0) by a central stalk formed by the gamma and epsilon chains, while a peripheral stalk is formed by the delta and b chains.

Its subcellular location is the cell membrane. In terms of biological role, key component of the proton channel; it plays a direct role in the translocation of protons across the membrane. This is ATP synthase subunit a from Streptococcus pneumoniae serotype 19F (strain G54).